Consider the following 1170-residue polypeptide: Thrombospondin-1 (1170 aa).

Residues 1 to 18 (MELLRGLGVLFLLHMCGS) form the signal peptide. The heparin-binding stretch occupies residues 47–95 (RLVKGQDLSSPAFRIENANLIPAVPDDKFQDLLDAVWADKGFIFLASLR). In terms of domain architecture, Laminin G-like spans 56 to 270 (SPAFRIENAN…HKTKDLQAIC (215 aa)). Cysteines 171 and 232 form a disulfide. Asn248 and Asn360 each carry an N-linked (GlcNAc...) asparagine glycan. A VWFC domain is found at 316–373 (PLCFHNGVQYKNNEEWTVDSCTECHCQNSVTICKKVSCPIMPCSNATVPDGECCPRCW). 3 TSP type-1 domains span residues 379–429 (DDGW…QECD), 435–490 (DGGW…DACP), and 492–547 (NGGW…QDCP). A C-linked (Man) tryptophan glycan is attached at Trp385. Cystine bridges form between Cys391-Cys423, Cys395-Cys428, and Cys406-Cys413. 2 C-linked (Man) tryptophan glycosylation sites follow: Trp438 and Trp441. Intrachain disulfides connect Cys447/Cys484, Cys451/Cys489, and Cys462/Cys474. The O-linked (Fuc...) threonine glycan is linked to Thr450. Trp498 carries C-linked (Man) tryptophan glycosylation. Intrachain disulfides connect Cys504–Cys541, Cys508–Cys546, Cys519–Cys531, Cys551–Cys562, Cys556–Cys572, Cys575–Cys586, Cys592–Cys608, Cys599–Cys617, Cys620–Cys644, Cys650–Cys663, Cys657–Cys676, Cys678–Cys689, Cys705–Cys713, Cys718–Cys738, Cys754–Cys774, Cys777–Cys797, Cys813–Cys833, Cys836–Cys856, Cys874–Cys894, Cys910–Cys930, and Cys946–Cys1167. The O-linked (Fuc...) threonine glycan is linked to Thr507. Residues 531–1152 (CVGDVTENQV…YAGGRLGLFV (622 aa)) form an involved in retention in extracellular matrix (ECM); involved in trimer formation region. Residues 547–587 (PIDGCLSNPCFAGAKCTSYPDGSWKCGACPPGYSGNGIQCK) form the EGF-like 1 domain. O-linked (Xyl) serine glycosylation is present at Ser553. Residues 646 to 690 (PRNPCTDGTHDCNKNAKCNYLGHYSDPMYRCECKPGYAGNGIICG) form the EGF-like 2 domain. TSP type-3 repeat units follow at residues 691–726 (EDTD…NSGQ), 727–762 (EDYD…NPAQ), 763–785 (YDYD…NPDQ), 786–821 (ADTD…NVDQ), 822–844 (RDTD…NPDQ), 845–882 (LDSD…NANQ), 883–918 (ADHD…NPDQ), and 919–954 (KDSD…DISE). Residue Asn708 is glycosylated (N-linked (GlcNAc...) asparagine). A disordered region spans residues 840–934 (HNPDQLDSDS…GRGDACKDDF (95 aa)). Composition is skewed to basic and acidic residues over residues 883-894 (ADHDKDGKGDAC) and 917-934 (DQKD…KDDF). The short motif at 926–928 (RGD) is the Cell attachment site element. The TSP C-terminal domain occupies 958–1170 (RRFQMIPLDP…SDMKYECRDS (213 aa)). N-linked (GlcNAc...) asparagine glycosylation is present at Asn1067.

The protein belongs to the thrombospondin family. In terms of assembly, homotrimer; disulfide-linked. Can bind to fibrinogen, fibronectin, laminin, type V collagen and integrins alpha-V/beta-1, alpha-V/beta-3 and alpha-IIb/beta-3. Binds heparin. Interacts (via the C-terminal domain) with CD47. Interacts (via the TSP type I repeats) with CD36; the interaction conveys an antiangiogenic effect. Interacts (via the TSP type I repeats) with HRG; the interaction blocks the antiangiogenic effect of THBS1 with CD36. Interacts with ATF6 (via lumenal domain). Interacts with FN1; this interaction is enhanced by TNFAIP6, which may act as a bridging molecule between FN1 and THBS1. Interacts with SIRPA; the interaction stimulates phosphorylation of SIRPA.

The protein resides in the secreted. Its subcellular location is the cell surface. It is found in the extracellular space. The protein localises to the extracellular matrix. It localises to the endoplasmic reticulum. The protein resides in the sarcoplasmic reticulum. Functionally, adhesive glycoprotein that mediates cell-to-cell and cell-to-matrix interactions. Multifunctional, involved in inflammation, angiogenesis, wound healing, reactive oxygen species (ROS) signaling, nitrous oxide (NO) signaling, apoptosis, senescence, aging, cellular self-renewal, stemness, and cardiovascular and metabolic homeostasis. Negatively modulates dendritic cell activation and cytokine release, as part of an autocrine feedback loop, contributing to the resolution of inflammation and immune homeostasis. Ligand for receptor CD47. Modulates nitrous oxide (NO) signaling via CD47, hence playing a role as a pressor agent, supporting blood pressure. Plays a role in endothelial cell senescence, acting via CD47, by increasing the abundance and activation of NADPH oxidase NOX1, and so generating excess ROS. Inhibits stem cell self-renewal, acting via CD47 signaling, probably by regulation of the stem cell transcription factors POU5F1/OCT4, SOX2, MYC/c-Myc and KLF4. Negatively modulates wound healing, acting via CD47. Ligand for receptor CD36. Involved in inducing apoptosis in podocytes in response to elevated free fatty acids, acting via CD36. Plays a role in suppressing angiogenesis, acting, depending on context, via CD36 or CD47. Promotes cellular senescence in a TP53-CDKN1A-RB1 signaling-dependent manner. Ligand for immunoglobulin-like cell surface receptor SIRPA. Involved in ROS signaling in non-phagocytic cells, stimulating NADPH oxidase-derived ROS production, acting via interaction with SIRPA. Plays a role in metabolic dysfunction in diet-induced obesity, perhaps acting by exacerbating adipose inflammatory activity; its effects may be mediated, at least in part, through enhanced adipocyte proliferation. Plays a role in ER stress response, via its interaction with the activating transcription factor 6 alpha (ATF6) which produces adaptive ER stress response factors. May be involved in age-related conditions, including metabolic dysregulation, during normal aging. The sequence is that of Thrombospondin-1 (Thbs1) from Mus musculus (Mouse).